The sequence spans 567 residues: Interleukin-1 receptor-like 1 (567 aa).

The N-terminal stretch at 1-26 (MIDRQRMGLWALAILTLPMYLTVTEG) is a signal peptide. Ig-like C2-type domains lie at 27–109 (SKSS…LNVT) and 120–203 (PDYL…VTAT). Topologically, residues 27-332 (SKSSWGLENE…LRRKQPIDHR (306 aa)) are extracellular. A disulfide bond links Cys-42 and Cys-93. N-linked (GlcNAc...) asparagine glycosylation is found at Asn-60, Asn-101, Asn-107, Asn-146, Asn-176, and Asn-194. 2 disulfides stabilise this stretch: Cys-117–Cys-157 and Cys-139–Cys-187. A flexible linker region spans residues 204–216 (RSFTVEEKGFSMF). In terms of domain architecture, Ig-like C2-type 3 spans 217 to 324 (PVITNPPYNH…GMIRHTIRLR (108 aa)). 3 N-linked (GlcNAc...) asparagine glycosylation sites follow: Asn-225, Asn-259, and Asn-278. Disulfide bonds link Cys-240-Cys-308 and Cys-243-Cys-287. A Glycyl lysine isopeptide (Lys-Gly) (interchain with G-Cter in ubiquitin) cross-link involves residue Lys-326. Residues 333–355 (SIYYIVAGCSLLLMFINVLVIVL) form a helical membrane-spanning segment. Topologically, residues 356-567 (KVFWIEVALF…GKACLDLKHF (212 aa)) are cytoplasmic. The region spanning 380-540 (KLYDAYIIYP…KFWKHVRYQM (161 aa)) is the TIR domain. Ser-442 carries the phosphoserine; by GSK3-beta modification. The active site involves Glu-466.

The protein belongs to the interleukin-1 receptor family. In terms of assembly, interacts with MYD88, IRAK1, IRAK4, and TRAF6. Bound to its ligand IL33, interacts with IL1RAP to form the minimal interleukin-33 signaling complex with a 1:1:1 stoichiometry. Interacts with KIT (bound to KITLG/SCF). A mast cell-specific KITLG/SCF-induced interleukin-33 signaling complex contains IL1RL1, IL1RAP, KIT and MYD88. Interacts with TMED1. In terms of processing, phosphorylated by GSK3B at Ser-442; leading to proteasomal degradation. Post-translationally, ubiquitinated at Lys-326 in a FBXL19-mediated manner; leading to proteasomal degradation. Ubiquitination by TRAF6 via 'Lys-27'-linked polyubiquitination and deubiquitination by USP38 serves as a critical regulatory mechanism for fine-tuning IL1RL1-mediated inflammatory response. In terms of tissue distribution, predominantly expressed in hematopoietic tissues, and in macrophage, erythroid, epithelial and fibroblast cell lines. Isoform A is expressed in brain astrocytes and microglia. Isoform B is expressed in brain endothelial cells.

It localises to the cell membrane. The protein resides in the secreted. It carries out the reaction NAD(+) + H2O = ADP-D-ribose + nicotinamide + H(+). In terms of biological role, receptor for interleukin-33 (IL-33) which plays crucial roles in innate and adaptive immunity, contributing to tissue homeostasis and responses to environmental stresses together with coreceptor IL1RAP. Its stimulation recruits MYD88, IRAK1, IRAK4, and TRAF6, followed by phosphorylation of MAPK3/ERK1 and/or MAPK1/ERK2, MAPK14, and MAPK8. Possibly involved in helper T-cell function. Upon tissue injury, induces UCP2-dependent mitochondrial rewiring that attenuates the generation of reactive oxygen species and preserves the integrity of Krebs cycle required for persistent production of itaconate and subsequent GATA3-dependent differentiation of inflammation-resolving alternatively activated macrophages. Its function is as follows. Inhibits IL-33 signaling. The sequence is that of Interleukin-1 receptor-like 1 (Il1rl1) from Mus musculus (Mouse).